The following is a 125-amino-acid chain: Small ribosomal subunit protein uS11 (125 aa).

The protein belongs to the universal ribosomal protein uS11 family. Part of the 30S ribosomal subunit. Interacts with proteins S7 and S18. Binds to IF-3.

Its function is as follows. Located on the platform of the 30S subunit, it bridges several disparate RNA helices of the 16S rRNA. Forms part of the Shine-Dalgarno cleft in the 70S ribosome. In Aquifex aeolicus (strain VF5), this protein is Small ribosomal subunit protein uS11.